The following is a 438-amino-acid chain: Mannan endo-1,4-beta-mannosidase F (438 aa).

Residues 1 to 17 form the signal peptide; the sequence is MHPLPSVALLSAIGAVA. Residues 19 to 54 form the CBM1 domain; it reads QVGPWGQCGGRSYTGETSCVSGWSCVLFNEWYSQCQ. The tract at residues 60–96 is ser-rich linker; that stretch reads STSSVSATAAPSSTSSSKESVPSATTSKKPVPTGSSS. Low complexity predominate over residues 61–86; sequence TSSVSATAAPSSTSSSKESVPSATTS. The tract at residues 61–92 is disordered; the sequence is TSSVSATAAPSSTSSSKESVPSATTSKKPVPT. The segment at 97–438 is catalytic; the sequence is FVKADGLKFN…CGVADHLSTL (342 aa). Substrate-binding residues include Trp149 and Asn263. Residue Glu264 is the Proton donor of the active site. An N-linked (GlcNAc...) asparagine glycan is attached at Asn277. A substrate-binding site is contributed by Tyr339. The active-site Nucleophile is Glu373. A substrate-binding site is contributed by Trp402.

Belongs to the glycosyl hydrolase 5 (cellulase A) family.

It is found in the secreted. The catalysed reaction is Random hydrolysis of (1-&gt;4)-beta-D-mannosidic linkages in mannans, galactomannans and glucomannans.. Its function is as follows. Endo-1,4-mannanase, a crucial enzyme for depolymerization of seed galactomannans and wood galactoglucomannans. In Aspergillus fumigatus (strain ATCC MYA-4609 / CBS 101355 / FGSC A1100 / Af293) (Neosartorya fumigata), this protein is Mannan endo-1,4-beta-mannosidase F (manF).